A 256-amino-acid chain; its full sequence is 1-(5-phosphoribosyl)-5-[(5-phosphoribosylamino)methylideneamino] imidazole-4-carboxamide isomerase (256 aa).

Asp8 serves as the catalytic Proton acceptor. The Proton donor role is filled by Asp130.

It belongs to the HisA/HisF family.

Its subcellular location is the cytoplasm. It catalyses the reaction 1-(5-phospho-beta-D-ribosyl)-5-[(5-phospho-beta-D-ribosylamino)methylideneamino]imidazole-4-carboxamide = 5-[(5-phospho-1-deoxy-D-ribulos-1-ylimino)methylamino]-1-(5-phospho-beta-D-ribosyl)imidazole-4-carboxamide. The protein operates within amino-acid biosynthesis; L-histidine biosynthesis; L-histidine from 5-phospho-alpha-D-ribose 1-diphosphate: step 4/9. The chain is 1-(5-phosphoribosyl)-5-[(5-phosphoribosylamino)methylideneamino] imidazole-4-carboxamide isomerase from Pelodictyon phaeoclathratiforme (strain DSM 5477 / BU-1).